Reading from the N-terminus, the 75-residue chain is ATP synthase subunit c (75 aa).

Transmembrane regions (helical) follow at residues 9-29 (IGAG…GNIW) and 52-72 (IGFA…LILL).

It belongs to the ATPase C chain family. In terms of assembly, F-type ATPases have 2 components, F(1) - the catalytic core - and F(0) - the membrane proton channel. F(1) has five subunits: alpha(3), beta(3), gamma(1), delta(1), epsilon(1). F(0) has four main subunits: a(1), b(1), b'(1) and c(10-14). The alpha and beta chains form an alternating ring which encloses part of the gamma chain. F(1) is attached to F(0) by a central stalk formed by the gamma and epsilon chains, while a peripheral stalk is formed by the delta, b and b' chains.

Its subcellular location is the cell inner membrane. Functionally, f(1)F(0) ATP synthase produces ATP from ADP in the presence of a proton or sodium gradient. F-type ATPases consist of two structural domains, F(1) containing the extramembraneous catalytic core and F(0) containing the membrane proton channel, linked together by a central stalk and a peripheral stalk. During catalysis, ATP synthesis in the catalytic domain of F(1) is coupled via a rotary mechanism of the central stalk subunits to proton translocation. Its function is as follows. Key component of the F(0) channel; it plays a direct role in translocation across the membrane. A homomeric c-ring of between 10-14 subunits forms the central stalk rotor element with the F(1) delta and epsilon subunits. The chain is ATP synthase subunit c from Rhodospirillum rubrum (strain ATCC 11170 / ATH 1.1.1 / DSM 467 / LMG 4362 / NCIMB 8255 / S1).